A 159-amino-acid polypeptide reads, in one-letter code: 2-C-methyl-D-erythritol 2,4-cyclodiphosphate synthase (159 aa).

Residues aspartate 8 and histidine 10 each contribute to the a divalent metal cation site. 4-CDP-2-C-methyl-D-erythritol 2-phosphate-binding positions include 8–10 and 34–35; these read DVH and HS. Histidine 42 lines the a divalent metal cation pocket. 4-CDP-2-C-methyl-D-erythritol 2-phosphate contacts are provided by residues 56 to 58, 61 to 65, 100 to 106, 132 to 135, phenylalanine 139, and arginine 142; these read DIG, FPDTD, AQAPKML, and TTTE.

It belongs to the IspF family. In terms of assembly, homotrimer. A divalent metal cation is required as a cofactor.

The catalysed reaction is 4-CDP-2-C-methyl-D-erythritol 2-phosphate = 2-C-methyl-D-erythritol 2,4-cyclic diphosphate + CMP. It functions in the pathway isoprenoid biosynthesis; isopentenyl diphosphate biosynthesis via DXP pathway; isopentenyl diphosphate from 1-deoxy-D-xylulose 5-phosphate: step 4/6. In terms of biological role, involved in the biosynthesis of isopentenyl diphosphate (IPP) and dimethylallyl diphosphate (DMAPP), two major building blocks of isoprenoid compounds. Catalyzes the conversion of 4-diphosphocytidyl-2-C-methyl-D-erythritol 2-phosphate (CDP-ME2P) to 2-C-methyl-D-erythritol 2,4-cyclodiphosphate (ME-CPP) with a corresponding release of cytidine 5-monophosphate (CMP). The chain is 2-C-methyl-D-erythritol 2,4-cyclodiphosphate synthase from Salmonella choleraesuis (strain SC-B67).